A 568-amino-acid chain; its full sequence is DNA ligase 2 (568 aa).

An ATP-binding site is contributed by glutamate 254. Catalysis depends on lysine 256, which acts as the N6-AMP-lysine intermediate. ATP-binding residues include arginine 261, arginine 276, glutamate 306, phenylalanine 346, arginine 425, and lysine 431.

The protein belongs to the ATP-dependent DNA ligase family. Mg(2+) is required as a cofactor.

It catalyses the reaction ATP + (deoxyribonucleotide)n-3'-hydroxyl + 5'-phospho-(deoxyribonucleotide)m = (deoxyribonucleotide)n+m + AMP + diphosphate.. Its function is as follows. DNA ligase that seals nicks in double-stranded DNA during DNA replication, DNA recombination and DNA repair. The sequence is that of DNA ligase 2 from Methanosarcina acetivorans (strain ATCC 35395 / DSM 2834 / JCM 12185 / C2A).